A 211-amino-acid chain; its full sequence is Cytochrome c biogenesis ATP-binding export protein CcmA (211 aa).

One can recognise an ABC transporter domain in the interval 1 to 211 (MAIHNLACVR…RMAEATSCFG (211 aa)). 33–40 (GSNGAGKT) is a binding site for ATP.

This sequence belongs to the ABC transporter superfamily. CcmA exporter (TC 3.A.1.107) family. In terms of assembly, the complex is composed of two ATP-binding proteins (CcmA) and two transmembrane proteins (CcmB).

Its subcellular location is the cell inner membrane. It catalyses the reaction heme b(in) + ATP + H2O = heme b(out) + ADP + phosphate + H(+). In terms of biological role, part of the ABC transporter complex CcmAB involved in the biogenesis of c-type cytochromes; once thought to export heme, this seems not to be the case, but its exact role is uncertain. Responsible for energy coupling to the transport system. The polypeptide is Cytochrome c biogenesis ATP-binding export protein CcmA (Sodalis glossinidius (strain morsitans)).